A 358-amino-acid chain; its full sequence is Extracellular phospholipase C (358 aa).

The protein resides in the secreted. In Dickeya chrysanthemi (Pectobacterium chrysanthemi), this protein is Extracellular phospholipase C (plcA).